The following is a 310-amino-acid chain: Polyprenyl transferase ntnF (310 aa).

A run of 8 helical transmembrane segments spans residues 30–50, 63–83, 110–130, 154–174, 185–205, 230–250, 255–275, and 286–306; these read HTPEGLSTASIGWLALFFYAI, FLGIFACYQITHGVFCMWNDI, AMVAFIIGLALSLGVTYAMLG, IWAPQAVLGLTMAACVLPPWV, LPASLFGAIFSWLVYLDLIYA, ACLTVLGALQIAFFAVAAFEA, FLWVFGIAVWAISVPWSILSL, and IFLVNAILGIYLAAVSGTDVW.

This sequence belongs to the UbiA prenyltransferase family. Requires Mg(2+) as cofactor.

It is found in the membrane. It functions in the pathway secondary metabolite biosynthesis; terpenoid biosynthesis. Olyprenyl transferase; part of the gene cluster that mediates the biosynthesis of the meroterpenoids nectripenoids A and B, as well as cochliquninone D and isocochliquninone E. The pathway probably begins with the HR-PKS ntnH that catalyzes two chain-extension steps to form a reduced triketide, which then primes the SAT domain in the NR-PKS ntnG to initiate three more cycles of extension to give a linear hexaketide corresponding to the polyketide part of nectripenoids. The FAD-dependent monooxygenase ntnJ then performs an oxidative decarboxylation at C11 of the ntnH/ntnG product, via an electrophilic aromatic hydroxylation with concomitant ipso-decarboxylation. The membrane-bound polyprenyl transferase ntnF then introduces a farnesyl group before the FAD-dependent monooxygenase ntnK functions as the first epoxidase on terminal C12'-C13' olefin, followed by a second epoxidation on C7'-C8' catalyzed by ntnA. The terpene cyclase/mutase ntnI then initiates the sequential tricyclic ring formation through protonation of the terminal epoxide and catalyzes the regioselective and stereoselective 6/6/6-tricyclic ring formation. The cytochrome P450 monooxygenase ntnM may then hydroxylate C1'. In Nectria sp, this protein is Polyprenyl transferase ntnF.